Reading from the N-terminus, the 242-residue chain is Small ribosomal subunit protein uS2 (242 aa).

The protein belongs to the universal ribosomal protein uS2 family.

The chain is Small ribosomal subunit protein uS2 from Shewanella putrefaciens (strain CN-32 / ATCC BAA-453).